The primary structure comprises 207 residues: Oligoribonuclease (207 aa).

Residues 8 to 172 (LVWIDCEMTG…ADILESVREL (165 aa)) enclose the Exonuclease domain. Y129 is a catalytic residue.

It belongs to the oligoribonuclease family.

It is found in the cytoplasm. Its function is as follows. 3'-to-5' exoribonuclease specific for small oligoribonucleotides. The protein is Oligoribonuclease of Leifsonia xyli subsp. xyli (strain CTCB07).